The primary structure comprises 122 residues: MIQPLSKLVVADNTGAKEIMCIRVLGGSKHRYGTVGDLIVASVKKAEPNAAVKKGDVVYAVIVRTKKEYRRKDGSYIKFDDNAAVLVTPQGQPRGTRIFGPVARELREKHYMRIISLAPEVW.

It belongs to the universal ribosomal protein uL14 family. In terms of assembly, part of the 50S ribosomal subunit. Forms a cluster with proteins L3 and L19. In the 70S ribosome, L14 and L19 interact and together make contacts with the 16S rRNA in bridges B5 and B8.

Its function is as follows. Binds to 23S rRNA. Forms part of two intersubunit bridges in the 70S ribosome. The protein is Large ribosomal subunit protein uL14 of Thermomicrobium roseum (strain ATCC 27502 / DSM 5159 / P-2).